The following is a 215-amino-acid chain: 3-demethoxyubiquinol 3-hydroxylase (215 aa).

Fe cation-binding residues include glutamate 64, glutamate 94, histidine 97, glutamate 146, glutamate 178, and histidine 181.

Belongs to the COQ7 family. Fe cation is required as a cofactor.

Its subcellular location is the cell membrane. It carries out the reaction a 5-methoxy-2-methyl-3-(all-trans-polyprenyl)benzene-1,4-diol + AH2 + O2 = a 3-demethylubiquinol + A + H2O. The protein operates within cofactor biosynthesis; ubiquinone biosynthesis. Functionally, catalyzes the hydroxylation of 2-nonaprenyl-3-methyl-6-methoxy-1,4-benzoquinol during ubiquinone biosynthesis. In Pseudomonas fluorescens (strain Pf0-1), this protein is 3-demethoxyubiquinol 3-hydroxylase.